The primary structure comprises 306 residues: Pseudouridine-5'-phosphate glycosidase (306 aa).

Glu28 acts as the Proton donor in catalysis. Substrate is bound by residues Lys89 and Val109. Residue Asp139 coordinates Mn(2+). A substrate-binding site is contributed by 141–143; the sequence is SAD. The active-site Nucleophile is Lys160.

It belongs to the pseudouridine-5'-phosphate glycosidase family. Homotrimer. It depends on Mn(2+) as a cofactor.

It carries out the reaction D-ribose 5-phosphate + uracil = psi-UMP + H2O. Catalyzes the reversible cleavage of pseudouridine 5'-phosphate (PsiMP) to ribose 5-phosphate and uracil. Functions biologically in the cleavage direction, as part of a pseudouridine degradation pathway. The polypeptide is Pseudouridine-5'-phosphate glycosidase (Gemmatimonas aurantiaca (strain DSM 14586 / JCM 11422 / NBRC 100505 / T-27)).